The following is a 308-amino-acid chain: Probable pyridoxal 5'-phosphate synthase subunit pdx-1 (308 aa).

Residue aspartate 30 coordinates D-ribose 5-phosphate. Lysine 87 acts as the Schiff-base intermediate with D-ribose 5-phosphate in catalysis. Glycine 159 contacts D-ribose 5-phosphate. Arginine 171 is a D-glyceraldehyde 3-phosphate binding site. D-ribose 5-phosphate-binding positions include glycine 224 and 245 to 246 (GS).

Belongs to the PdxS/SNZ family.

The catalysed reaction is aldehydo-D-ribose 5-phosphate + D-glyceraldehyde 3-phosphate + L-glutamine = pyridoxal 5'-phosphate + L-glutamate + phosphate + 3 H2O + H(+). Its pathway is cofactor biosynthesis; pyridoxal 5'-phosphate biosynthesis. In terms of biological role, catalyzes the formation of pyridoxal 5'-phosphate from ribose 5-phosphate (RBP), glyceraldehyde 3-phosphate (G3P) and ammonia. The ammonia is provided by pdx-2. Can also use ribulose 5-phosphate and dihydroxyacetone phosphate as substrates, resulting from enzyme-catalyzed isomerization of RBP and G3P, respectively. Also plays an indirect role in resistance to singlet oxygen-generating photosensitizers. This chain is Probable pyridoxal 5'-phosphate synthase subunit pdx-1 (pdx-1), found in Neurospora crassa (strain ATCC 24698 / 74-OR23-1A / CBS 708.71 / DSM 1257 / FGSC 987).